We begin with the raw amino-acid sequence, 443 residues long: Thymidine phosphorylase (443 aa).

This sequence belongs to the thymidine/pyrimidine-nucleoside phosphorylase family. Homodimer.

The enzyme catalyses thymidine + phosphate = 2-deoxy-alpha-D-ribose 1-phosphate + thymine. It participates in pyrimidine metabolism; dTMP biosynthesis via salvage pathway; dTMP from thymine: step 1/2. Functionally, the enzymes which catalyze the reversible phosphorolysis of pyrimidine nucleosides are involved in the degradation of these compounds and in their utilization as carbon and energy sources, or in the rescue of pyrimidine bases for nucleotide synthesis. The protein is Thymidine phosphorylase of Shewanella frigidimarina (strain NCIMB 400).